We begin with the raw amino-acid sequence, 78 residues long: Large ribosomal subunit protein bL28 (78 aa).

The tract at residues 1 to 29 is disordered; the sequence is MSAHCQVTGRQPSFGKSVSHSHRRTSRRW.

This sequence belongs to the bacterial ribosomal protein bL28 family.

This is Large ribosomal subunit protein bL28 from Corynebacterium efficiens (strain DSM 44549 / YS-314 / AJ 12310 / JCM 11189 / NBRC 100395).